The primary structure comprises 266 residues: Glutamate racemase (266 aa).

Residues 9–10 (DS) and 41–42 (YG) contribute to the substrate site. Cys72 (proton donor/acceptor) is an active-site residue. 73-74 (NT) contacts substrate. Catalysis depends on Cys184, which acts as the Proton donor/acceptor. 185–186 (TH) contacts substrate.

It belongs to the aspartate/glutamate racemases family.

The catalysed reaction is L-glutamate = D-glutamate. Its pathway is cell wall biogenesis; peptidoglycan biosynthesis. Its function is as follows. Provides the (R)-glutamate required for cell wall biosynthesis. The sequence is that of Glutamate racemase from Staphylococcus aureus (strain Mu3 / ATCC 700698).